We begin with the raw amino-acid sequence, 337 residues long: Equatorin (337 aa).

The N-terminal stretch at 1–20 (MDFILLIILSGVFLPDIISL) is a signal peptide. Over 21–183 (QPIVGQEPGV…LSELEEIKLK (163 aa)) the chain is Lumenal. A disordered region spans residues 110–130 (SKPTASGEEEKPSESSRKTST). A compositionally biased stretch (basic and acidic residues) spans 117–126 (EEEKPSESSR). N145 is a glycosylation site (N-linked (GlcNAc...) asparagine). A helical membrane pass occupies residues 184 to 204 (LMLGISLMTLVLLIPLLIFCF). Residues 205–337 (ATLYKLRHLR…LLNKEGSPSN (133 aa)) lie on the Cytoplasmic side of the membrane. Residues 259-283 (SSEMRRSRTRRSKSKPMDFSAGSNQ) form a disordered region. S336 carries the post-translational modification Phosphoserine.

As to quaternary structure, interacts with SNAP25. In terms of processing, highly N- and O-glycosylated; contains sialic acid. MN9 epitope is O-glycosylated. Sperm specific, including germ cells (at protein level).

It is found in the cytoplasmic vesicle. Its subcellular location is the secretory vesicle. The protein localises to the acrosome membrane. The protein resides in the acrosome inner membrane. It localises to the acrosome outer membrane. It is found in the nucleus. Its subcellular location is the cytoplasm. Functionally, acrosomal membrane-anchored protein involved in the process of fertilization and in acrosome biogenesis. The chain is Equatorin (Eqtn) from Mus musculus (Mouse).